Here is a 654-residue protein sequence, read N- to C-terminus: Peptide-N(4)-(N-acetyl-beta-glucosaminyl)asparagine amidase (654 aa).

Alanine 2 carries the post-translational modification N-acetylalanine. One can recognise a PUB domain in the interval 30–91 (EASKLLLTYA…EGETHLIFPK (62 aa)). The segment covering 112–123 (RLDGSNKSHKVE) has biased composition (basic and acidic residues). The interval 112–167 (RLDGSNKSHKVESSQQPAASTQLPTTPSSNPSGLNQHTRNRQGQSPDPPSASTVTP) is disordered. Residues 124–167 (SSQQPAASTQLPTTPSSNPSGLNQHTRNRQGQSPDPPSASTVTP) show a composition bias toward polar residues. Position 137 is a phosphothreonine (threonine 137). 4 residues coordinate Zn(2+): cysteine 250, cysteine 253, cysteine 283, and cysteine 286. Residue cysteine 309 is the Nucleophile of the active site. Active-site residues include histidine 336 and aspartate 353. The PAW domain occupies 454–654 (ELGGRISGSV…LEIIIKFSDL (201 aa)).

Belongs to the transglutaminase-like superfamily. PNGase family. Component of a complex required to couple retrotranslocation, ubiquitination and deglycosylation composed of NGLY1, SAKS1, AMFR, VCP and RAD23B. Interacts with the proteasome components RAD23B and PSMC1. Interacts with directly with VCP. Interacts with DERL1, bringing it close to the endoplasmic reticulum membrane. Interacts with SAKS1. Zn(2+) serves as cofactor.

It localises to the cytoplasm. The enzyme catalyses Hydrolysis of an N(4)-(acetyl-beta-D-glucosaminyl)asparagine residue in which the glucosamine residue may be further glycosylated, to yield a (substituted) N-acetyl-beta-D-glucosaminylamine and a peptide containing an aspartate residue.. Inhibited by Z-VAD-fmk, a well-known caspase inhibitor, which inhibits enzyme activity through covalent binding of the carbohydrate to the single Cys-306 residue. Specifically deglycosylates the denatured form of N-linked glycoproteins in the cytoplasm and assists their proteasome-mediated degradation. Cleaves the beta-aspartyl-glucosamine (GlcNAc) of the glycan and the amide side chain of Asn, converting Asn to Asp. Prefers proteins containing high-mannose over those bearing complex type oligosaccharides. Can recognize misfolded proteins in the endoplasmic reticulum that are exported to the cytosol to be destroyed and deglycosylate them, while it has no activity toward native proteins. Deglycosylation is a prerequisite for subsequent proteasome-mediated degradation of some, but not all, misfolded glycoproteins. The chain is Peptide-N(4)-(N-acetyl-beta-glucosaminyl)asparagine amidase (NGLY1) from Macaca fascicularis (Crab-eating macaque).